The primary structure comprises 212 residues: Calaxin (212 aa).

EF-hand domains are found at residues 65–100, 101–136, and 146–181; these read TDDM…FLRG, TLEE…SLLK, and GIKD…ETLL. Ca(2+) is bound by residues aspartate 78, aspartate 80, aspartate 82, cysteine 84, glutamate 89, aspartate 114, asparagine 116, aspartate 118, glutamate 125, aspartate 159, aspartate 161, aspartate 163, lysine 165, and aspartate 170.

In terms of assembly, component of the outer dynein arm-docking complex along with ODAD1, ODAD2, ODAD3 and ODAD4. In terms of tissue distribution, expressed in trachea multiciliated cells.

The protein resides in the cytoplasm. Its subcellular location is the cytoskeleton. It localises to the cilium axoneme. The protein localises to the cell projection. It is found in the cilium. The protein resides in the flagellum. Its function is as follows. Component of the outer dynein arm-docking complex (ODA-DC) that mediates outer dynein arms (ODA) binding onto the doublet microtubule. Seems to regulate the assembly of both ODAs and their axonemal docking complex onto ciliary microtubules. Regulates ciliary and flagellar motility and is required for cilia-driven determination of body laterality. The protein is Calaxin (CLXN) of Bos taurus (Bovine).